The following is a 440-amino-acid chain: Xaa-Pro dipeptidase (440 aa).

5 residues coordinate Mn(2+): D241, D252, H333, E378, and E417.

The protein belongs to the peptidase M24B family. Bacterial-type prolidase subfamily. Requires Mn(2+) as cofactor.

It carries out the reaction Xaa-L-Pro dipeptide + H2O = an L-alpha-amino acid + L-proline. Functionally, splits dipeptides with a prolyl residue in the C-terminal position. The polypeptide is Xaa-Pro dipeptidase (Glaesserella parasuis serovar 5 (strain SH0165) (Haemophilus parasuis)).